A 326-amino-acid polypeptide reads, in one-letter code: HTH-type transcriptional regulator BlaA (326 aa).

In terms of domain architecture, HTH lysR-type spans 1–59; that stretch reads MDVVNACRAFVKVSERGSFTVGAAAAQMSQSVASRRVAALEKHFGERLFDRASRRPSLT. Positions 19–38 form a DNA-binding region, H-T-H motif; it reads FTVGAAAAQMSQSVASRRVA. The segment at 289–326 is disordered; it reads TADHGPDPATGAGPGADAGTEPGARAEPGAPEEGAQAC. The segment covering 295 to 326 has biased composition (low complexity); that stretch reads DPATGAGPGADAGTEPGARAEPGAPEEGAQAC.

Belongs to the LysR transcriptional regulatory family.

Positive regulator of the expression of the gene (blaB) for beta-lactamase. It binds to the blaL-blaA intercistronic region. This chain is HTH-type transcriptional regulator BlaA (blaA), found in Streptomyces cacaoi.